A 758-amino-acid chain; its full sequence is 5-methyltetrahydropteroyltriglutamate--homocysteine methyltransferase (758 aa).

5-methyltetrahydropteroyltri-L-glutamate-binding positions include 16-19 and Lys-112; that span reads RELK. Residues 433–435 and Glu-486 contribute to the L-homocysteine site; that span reads IGS. L-methionine is bound by residues 433 to 435 and Glu-486; that span reads IGS. 5-methyltetrahydropteroyltri-L-glutamate is bound by residues 517 to 518 and Trp-563; that span reads RC. Asp-601 provides a ligand contact to L-homocysteine. Asp-601 serves as a coordination point for L-methionine. Glu-607 lines the 5-methyltetrahydropteroyltri-L-glutamate pocket. Zn(2+) contacts are provided by His-643, Cys-645, and Glu-667. Residue His-696 is the Proton donor of the active site. Position 728 (Cys-728) interacts with Zn(2+).

It belongs to the vitamin-B12 independent methionine synthase family. Zn(2+) serves as cofactor.

The enzyme catalyses 5-methyltetrahydropteroyltri-L-glutamate + L-homocysteine = tetrahydropteroyltri-L-glutamate + L-methionine. It functions in the pathway amino-acid biosynthesis; L-methionine biosynthesis via de novo pathway; L-methionine from L-homocysteine (MetE route): step 1/1. In terms of biological role, catalyzes the transfer of a methyl group from 5-methyltetrahydrofolate to homocysteine resulting in methionine formation. In Neisseria meningitidis serogroup C (strain 053442), this protein is 5-methyltetrahydropteroyltriglutamate--homocysteine methyltransferase.